The primary structure comprises 197 residues: FMN-dependent NADH:quinone oxidoreductase (197 aa).

FMN is bound by residues S10, 16-18 (SQS), 93-96 (MYNF), and 137-140 (TRGG).

It belongs to the azoreductase type 1 family. Homodimer. It depends on FMN as a cofactor.

The enzyme catalyses 2 a quinone + NADH + H(+) = 2 a 1,4-benzosemiquinone + NAD(+). The catalysed reaction is N,N-dimethyl-1,4-phenylenediamine + anthranilate + 2 NAD(+) = 2-(4-dimethylaminophenyl)diazenylbenzoate + 2 NADH + 2 H(+). Its function is as follows. Quinone reductase that provides resistance to thiol-specific stress caused by electrophilic quinones. Functionally, also exhibits azoreductase activity. Catalyzes the reductive cleavage of the azo bond in aromatic azo compounds to the corresponding amines. The protein is FMN-dependent NADH:quinone oxidoreductase of Shewanella denitrificans (strain OS217 / ATCC BAA-1090 / DSM 15013).